The sequence spans 490 residues: Bifunctional protein HldE (490 aa).

Positions 1-330 are ribokinase; the sequence is MNNFDTLLQS…RKILPHASLA (330 aa). 205-208 serves as a coordination point for ATP; it reads NRKE. The active site involves D275. The tract at residues 358–490 is cytidylyltransferase; that stretch reads FTNGCFDILH…LVEKAREGTS (133 aa).

This sequence in the N-terminal section; belongs to the carbohydrate kinase PfkB family. It in the C-terminal section; belongs to the cytidylyltransferase family. In terms of assembly, homodimer.

It catalyses the reaction D-glycero-beta-D-manno-heptose 7-phosphate + ATP = D-glycero-beta-D-manno-heptose 1,7-bisphosphate + ADP + H(+). The catalysed reaction is D-glycero-beta-D-manno-heptose 1-phosphate + ATP + H(+) = ADP-D-glycero-beta-D-manno-heptose + diphosphate. Its pathway is nucleotide-sugar biosynthesis; ADP-L-glycero-beta-D-manno-heptose biosynthesis; ADP-L-glycero-beta-D-manno-heptose from D-glycero-beta-D-manno-heptose 7-phosphate: step 1/4. It participates in nucleotide-sugar biosynthesis; ADP-L-glycero-beta-D-manno-heptose biosynthesis; ADP-L-glycero-beta-D-manno-heptose from D-glycero-beta-D-manno-heptose 7-phosphate: step 3/4. Its function is as follows. Catalyzes the phosphorylation of D-glycero-D-manno-heptose 7-phosphate at the C-1 position to selectively form D-glycero-beta-D-manno-heptose-1,7-bisphosphate. In terms of biological role, catalyzes the ADP transfer from ATP to D-glycero-beta-D-manno-heptose 1-phosphate, yielding ADP-D-glycero-beta-D-manno-heptose. In Rhodopseudomonas palustris (strain HaA2), this protein is Bifunctional protein HldE.